A 156-amino-acid chain; its full sequence is 6,7-dimethyl-8-ribityllumazine synthase (156 aa).

Residues F22, 57–59, and 81–83 each bind 5-amino-6-(D-ribitylamino)uracil; these read AVE and CVI. (2S)-2-hydroxy-3-oxobutyl phosphate is bound at residue 86-87; it reads GT. The active-site Proton donor is the H89. F114 contacts 5-amino-6-(D-ribitylamino)uracil. (2S)-2-hydroxy-3-oxobutyl phosphate is bound at residue R128.

This sequence belongs to the DMRL synthase family. Forms an icosahedral capsid composed of 60 subunits, arranged as a dodecamer of pentamers.

It carries out the reaction (2S)-2-hydroxy-3-oxobutyl phosphate + 5-amino-6-(D-ribitylamino)uracil = 6,7-dimethyl-8-(1-D-ribityl)lumazine + phosphate + 2 H2O + H(+). It participates in cofactor biosynthesis; riboflavin biosynthesis; riboflavin from 2-hydroxy-3-oxobutyl phosphate and 5-amino-6-(D-ribitylamino)uracil: step 1/2. In terms of biological role, catalyzes the formation of 6,7-dimethyl-8-ribityllumazine by condensation of 5-amino-6-(D-ribitylamino)uracil with 3,4-dihydroxy-2-butanone 4-phosphate. This is the penultimate step in the biosynthesis of riboflavin. This Vibrio cholerae serotype O1 (strain ATCC 39315 / El Tor Inaba N16961) protein is 6,7-dimethyl-8-ribityllumazine synthase.